We begin with the raw amino-acid sequence, 297 residues long: Trans-enoyl reductase TOXD (297 aa).

NADP(+) is bound by residues 162–165 (STAT) and tyrosine 203.

Belongs to the zinc-containing alcohol dehydrogenase family. In terms of assembly, monomer.

Functionally, trans-enoyl reductase; part of the diffuse TOX2 gene cluster that mediates the biosynthesis of the HC-toxin, cyclic tetrapeptide of structure cyclo(D-Pro-L-Ala-D-Ala-L-Aeo), where Aeo stands for 2-amino-9,10-epoxi-8-oxodecanoic acid. HC-toxin is a determinant of specificity and virulence in the interaction between the producing fungus and its host, maize. TOXD does not seem to play a role in HC-toxin biosynthesis. The chain is Trans-enoyl reductase TOXD from Cochliobolus carbonum (Maize leaf spot fungus).